Consider the following 249-residue polypeptide: Type I iodothyronine deiodinase (249 aa).

Over 1 to 12 (MELPLPGLWLKR) the chain is Extracellular. Residues 13-33 (LWVLFQVALHVAMGKVLMTLF) traverse the membrane as a helical; Signal-anchor for type III membrane protein segment. Over 34 to 249 (PGRVKQDILA…VRAVLEKLHS (216 aa)) the chain is Cytoplasmic. U126 is an active-site residue. A non-standard amino acid (selenocysteine) is located at residue U126.

The protein belongs to the iodothyronine deiodinase family. Predominantly monomer. Can form homodimers but homodimerization is not essential for enzyme activity.

The protein resides in the cell membrane. Its subcellular location is the endoplasmic reticulum membrane. The protein localises to the basolateral cell membrane. The catalysed reaction is 3,3',5-triiodo-L-thyronine + iodide + A + H(+) = L-thyroxine + AH2. It catalyses the reaction 3,3',5'-triiodo-L-thyronine + iodide + A + H(+) = L-thyroxine + AH2. The enzyme catalyses 3,3'-diiodo-L-thyronine + iodide + A + H(+) = 3,3',5'-triiodo-L-thyronine + AH2. It carries out the reaction 3,3'-diiodo-L-thyronine + iodide + A + H(+) = 3,3',5-triiodo-L-thyronine + AH2. The catalysed reaction is 3'-iodo-L-thyronine + iodide + A + H(+) = 3',5'-diiodo-L-thyronine + AH2. It catalyses the reaction 3-iodo-L-thyronine + iodide + A + H(+) = 3,5-diiodo-L-thyronine + AH2. The enzyme catalyses 3-iodo-L-thyronine + iodide + A + H(+) = 3,3'-diiodo-L-thyronine + AH2. It carries out the reaction 3,3'-diiodothyronamine + iodide + A + H(+) = 3,3',5'-triiodothyronamine + AH2. The catalysed reaction is 3'-iodothyronamine + iodide + A + H(+) = 3',5'-diiodothyronamine + AH2. It catalyses the reaction 3-iodothyronamine + iodide + A + H(+) = 3,3'-diiodothyronamine + AH2. The enzyme catalyses 3,3'-diiodothyronamine + iodide + A + H(+) = 3,3',5-triiodothyronamine + AH2. It carries out the reaction 3-iodothyronamine + iodide + A + H(+) = 3,5-diiodothyronamine + AH2. The catalysed reaction is 3,3'-diiodo-L-thyronine sulfate + iodide + A + H(+) = 3,3',5'-triiodo-L-thyronine sulfate + AH2. It catalyses the reaction 3,3',5'-triiodo-L-thyronine sulfate + iodide + A + H(+) = L-thyroxine sulfate + AH2. The enzyme catalyses 3,3'-diiodo-L-thyronine sulfate + iodide + A + H(+) = 3,3',5-triiodo-L-thyronine sulfate + AH2. Its function is as follows. Plays a crucial role in the metabolism of thyroid hormones (TH) and has specific roles in TH activation and inactivation by deiodination. Catalyzes the deiodination of L-thyroxine (T4) to 3,5,3'-triiodothyronine (T3) and 3,3',5'-triiodothyronine (rT3) to 3,3'-diiodothyronine (3,3'-T2) via outer-ring deiodination (ORD). Catalyzes the deiodination of T4 to rT3, T3 to 3,3'-T2, 3,5-diiodothyronine (3,5-T2) to 3-monoiodothyronine (3-T1) and 3,3'-T2 to 3-T1 via inner-ring deiodination (IRD). Catalyzes the deiodination of 3',5'-diiodothyronine (3',5'-T2) to 3'-monoiodothyronine (3'-T1) via ORD. Catalyzes the phenolic ring deiodinations of 3,3',5'-triiodothyronamine, 3',5'-diiodothyronamine and 3,3'-diiodothyronamine as well as tyrosyl ring deiodinations of 3,5,3'-triiodothyronamine and 3,5-diiodothyronamine. Catalyzes the deiodination of L-thyroxine sulfate and 3,3',5-triiodo-L-thyronine sulfate via IRD and of 3,3',5'-triiodo-L-thyronine sulfate via ORD. The sequence is that of Type I iodothyronine deiodinase (DIO1) from Sus scrofa (Pig).